A 300-amino-acid chain; its full sequence is N-acetylmannosamine kinase (300 aa).

ATP contacts are provided by residues 5-12 and 132-139; these read ALDIGGTK and GVGGGIVL. Positions 156, 166, 168, and 173 each coordinate Zn(2+).

It belongs to the ROK (NagC/XylR) family. NanK subfamily. In terms of assembly, homodimer.

It catalyses the reaction an N-acyl-D-mannosamine + ATP = an N-acyl-D-mannosamine 6-phosphate + ADP + H(+). It functions in the pathway amino-sugar metabolism; N-acetylneuraminate degradation; D-fructose 6-phosphate from N-acetylneuraminate: step 2/5. Its function is as follows. Catalyzes the phosphorylation of N-acetylmannosamine (ManNAc) to ManNAc-6-P. The protein is N-acetylmannosamine kinase of Haemophilus influenzae (strain PittGG).